A 155-amino-acid chain; its full sequence is Putative pre-16S rRNA nuclease (155 aa).

The protein belongs to the YqgF nuclease family.

The protein localises to the cytoplasm. Functionally, could be a nuclease involved in processing of the 5'-end of pre-16S rRNA. This Xanthomonas campestris pv. campestris (strain B100) protein is Putative pre-16S rRNA nuclease.